The following is a 453-amino-acid chain: UDP-N-acetylmuramoylalanine--D-glutamate ligase (453 aa).

Position 115–121 (115–121) interacts with ATP; the sequence is GSNGKTT.

Belongs to the MurCDEF family.

The protein localises to the cytoplasm. The enzyme catalyses UDP-N-acetyl-alpha-D-muramoyl-L-alanine + D-glutamate + ATP = UDP-N-acetyl-alpha-D-muramoyl-L-alanyl-D-glutamate + ADP + phosphate + H(+). The protein operates within cell wall biogenesis; peptidoglycan biosynthesis. In terms of biological role, cell wall formation. Catalyzes the addition of glutamate to the nucleotide precursor UDP-N-acetylmuramoyl-L-alanine (UMA). This is UDP-N-acetylmuramoylalanine--D-glutamate ligase from Koribacter versatilis (strain Ellin345).